The primary structure comprises 327 residues: Cobalamin biosynthesis protein CobD (327 aa).

A run of 4 helical transmembrane segments spans residues 61 to 78 (MWLTVGLVAACIFAGLVI), 80 to 102 (SILPHAGTAGAIVEVVIVAILLA), 160 to 182 (GIVAPAFWFLVGGLPGLFAYKLI), and 300 to 322 (AALVLFWSTMSLMTGLVIAASLV).

It belongs to the CobD/CbiB family.

It localises to the cell membrane. The protein operates within cofactor biosynthesis; adenosylcobalamin biosynthesis. Functionally, converts cobyric acid to cobinamide by the addition of aminopropanol on the F carboxylic group. This chain is Cobalamin biosynthesis protein CobD, found in Brucella suis biovar 1 (strain 1330).